Here is a 564-residue protein sequence, read N- to C-terminus: Potassium-transporting ATPase potassium-binding subunit (564 aa).

Transmembrane regions (helical) follow at residues L7–F27, A67–L87, V135–L155, L179–P199, F258–V278, A286–E306, V382–I402, L420–A440, L487–L507, and G528–L548.

This sequence belongs to the KdpA family. As to quaternary structure, the system is composed of three essential subunits: KdpA, KdpB and KdpC.

The protein resides in the cell inner membrane. Part of the high-affinity ATP-driven potassium transport (or Kdp) system, which catalyzes the hydrolysis of ATP coupled with the electrogenic transport of potassium into the cytoplasm. This subunit binds the periplasmic potassium ions and delivers the ions to the membrane domain of KdpB through an intramembrane tunnel. In Pseudomonas syringae pv. tomato (strain ATCC BAA-871 / DC3000), this protein is Potassium-transporting ATPase potassium-binding subunit.